The following is a 231-amino-acid chain: Large ribosomal subunit protein uL1 (231 aa).

This sequence belongs to the universal ribosomal protein uL1 family. Part of the 50S ribosomal subunit.

Its function is as follows. Binds directly to 23S rRNA. The L1 stalk is quite mobile in the ribosome, and is involved in E site tRNA release. Functionally, protein L1 is also a translational repressor protein, it controls the translation of the L11 operon by binding to its mRNA. The polypeptide is Large ribosomal subunit protein uL1 (Dechloromonas aromatica (strain RCB)).